We begin with the raw amino-acid sequence, 248 residues long: Biosynthetic peptidoglycan transglycosylase (248 aa).

Residues 20 to 42 (WLRWLMAAPLLFAAASVLQVLIL) traverse the membrane as a helical segment.

This sequence belongs to the glycosyltransferase 51 family.

The protein localises to the cell inner membrane. It catalyses the reaction [GlcNAc-(1-&gt;4)-Mur2Ac(oyl-L-Ala-gamma-D-Glu-L-Lys-D-Ala-D-Ala)](n)-di-trans,octa-cis-undecaprenyl diphosphate + beta-D-GlcNAc-(1-&gt;4)-Mur2Ac(oyl-L-Ala-gamma-D-Glu-L-Lys-D-Ala-D-Ala)-di-trans,octa-cis-undecaprenyl diphosphate = [GlcNAc-(1-&gt;4)-Mur2Ac(oyl-L-Ala-gamma-D-Glu-L-Lys-D-Ala-D-Ala)](n+1)-di-trans,octa-cis-undecaprenyl diphosphate + di-trans,octa-cis-undecaprenyl diphosphate + H(+). The protein operates within cell wall biogenesis; peptidoglycan biosynthesis. Functionally, peptidoglycan polymerase that catalyzes glycan chain elongation from lipid-linked precursors. This is Biosynthetic peptidoglycan transglycosylase from Xanthomonas euvesicatoria pv. vesicatoria (strain 85-10) (Xanthomonas campestris pv. vesicatoria).